Here is a 321-residue protein sequence, read N- to C-terminus: Protein stand still (321 aa).

Coiled coils occupy residues 74–103 and 147–167; these read KLHEMKVAALEERRDRIMKNRRFAKSRKKA and KQEQEGATRKLEDSTSDKANL. Positions 146-162 are enriched in basic and acidic residues; that stretch reads HKQEQEGATRKLEDSTS. Disordered stretches follow at residues 146 to 166 and 227 to 248; these read HKQEQEGATRKLEDSTSDKAN and QVPPVQGESKSSGSLASSMEDV. The segment covering 235-244 has biased composition (low complexity); sequence SKSSGSLASS. Residues 272 to 292 adopt a coiled-coil conformation; the sequence is QRDVLQRLERSMAQISQELHC.

In terms of tissue distribution, germ cells specific. Expressed in all germ cells. During the first instar larvae, it is expressed in all germ cells of both sexes. In third instar larvae, it decreases in male germ cells while it remains in female germ cells. In adult ovary, it is expressed in cells of the germarium, including the stem cells. In the early previtellogenic stages, it is highly expressed in the nurse cells. During vitellogenesis, it is not translocated into the maturing egg. In testes, it is only expressed during some steps of male germline differentiation. At the apex testis, it is expressed at low level in stem cells and dividing spermatogonia, while in newly formed 16-cell cysts of primary spermatocytes, it is transiently but strongly expressed before vanishing during spermatocyte growth phase.

Its subcellular location is the nucleus. In terms of biological role, essential in the female germline for proper survival, sex determination and differentiation. Participates in the transcriptional activation of Otu. Does not regulate the expression of Ovo. This is Protein stand still (stil) from Drosophila melanogaster (Fruit fly).